The primary structure comprises 333 residues: NADH-quinone oxidoreductase subunit H (333 aa).

A run of 8 helical transmembrane segments spans residues 15 to 35 (FFIFFGLAVLLLFAVLGFVTY), 88 to 108 (FILAPIIAFAPAFMVLAVIPF), 117 to 137 (IGVGLLYYIAISGITTIGVLT), 159 to 179 (ISYEIPLVMSVIGIVLLTGSL), 191 to 211 (VWYIFAQPIGFIIFLIAAVAE), 241 to 261 (FFMLAEYVYLFGMASLMTVLF), 273 to 293 (FIPGAVWFALKFSAVVFLFIW), and 313 to 333 (VLLPIALANIFLTALIKELFF).

It belongs to the complex I subunit 1 family. NDH-1 is composed of 14 different subunits. Subunits NuoA, H, J, K, L, M, N constitute the membrane sector of the complex.

It localises to the cell membrane. The enzyme catalyses a quinone + NADH + 5 H(+)(in) = a quinol + NAD(+) + 4 H(+)(out). In terms of biological role, NDH-1 shuttles electrons from NADH, via FMN and iron-sulfur (Fe-S) centers, to quinones in the respiratory chain. The immediate electron acceptor for the enzyme in this species is believed to be ubiquinone. Couples the redox reaction to proton translocation (for every two electrons transferred, four hydrogen ions are translocated across the cytoplasmic membrane), and thus conserves the redox energy in a proton gradient. This subunit may bind ubiquinone. The sequence is that of NADH-quinone oxidoreductase subunit H from Bacillus cytotoxicus (strain DSM 22905 / CIP 110041 / 391-98 / NVH 391-98).